A 305-amino-acid chain; its full sequence is Methionyl-tRNA formyltransferase (305 aa).

A (6S)-5,6,7,8-tetrahydrofolate-binding site is contributed by 111 to 114 (SLLP).

Belongs to the Fmt family.

The enzyme catalyses L-methionyl-tRNA(fMet) + (6R)-10-formyltetrahydrofolate = N-formyl-L-methionyl-tRNA(fMet) + (6S)-5,6,7,8-tetrahydrofolate + H(+). In terms of biological role, attaches a formyl group to the free amino group of methionyl-tRNA(fMet). The formyl group appears to play a dual role in the initiator identity of N-formylmethionyl-tRNA by promoting its recognition by IF2 and preventing the misappropriation of this tRNA by the elongation apparatus. In Helicobacter acinonychis (strain Sheeba), this protein is Methionyl-tRNA formyltransferase.